The primary structure comprises 379 residues: Homoserine O-succinyltransferase (379 aa).

The region spanning 51 to 360 (NAVLICHALS…DAPQGHDAFL (310 aa)) is the AB hydrolase-1 domain. The Nucleophile role is filled by Ser-157. Substrate is bound at residue Arg-227. Residues Asp-323 and His-356 contribute to the active site. A substrate-binding site is contributed by Asp-357.

It belongs to the AB hydrolase superfamily. MetX family. Homodimer.

The protein localises to the cytoplasm. It catalyses the reaction L-homoserine + succinyl-CoA = O-succinyl-L-homoserine + CoA. It participates in amino-acid biosynthesis; L-methionine biosynthesis via de novo pathway; O-succinyl-L-homoserine from L-homoserine: step 1/1. Its function is as follows. Transfers a succinyl group from succinyl-CoA to L-homoserine, forming succinyl-L-homoserine. This chain is Homoserine O-succinyltransferase, found in Pseudomonas savastanoi pv. phaseolicola (strain 1448A / Race 6) (Pseudomonas syringae pv. phaseolicola (strain 1448A / Race 6)).